Here is a 2312-residue protein sequence, read N- to C-terminus: Protein Ycf2 (2312 aa).

3 disordered regions span residues 170 to 191 (SSQLKGSSDQSRDHFDSIGTED), 223 to 253 (TEIESDRFSKGLSGSSSKSRLFTEGEKEMNN), and 942 to 1009 (KRKK…KRKE). Residues 232–242 (KGLSGSSSKSR) show a composition bias toward low complexity. 2 stretches are compositionally biased toward basic and acidic residues: residues 243–252 (LFTEGEKEMN) and 950–1007 (KRKE…PEKR). 1439 to 1446 (GSIGSGRS) is an ATP binding site. Disordered stretches follow at residues 1513–1532 (YEDRDSDDYEPGASDDYEPG), 1857–1983 (LVGS…LLRP), and 2050–2166 (PAEE…DGFS). Residues 1863-1963 (TEEEVEGTEE…GEGTEDEEVE (101 aa)) show a composition bias toward acidic residues. Positions 1964 to 1976 (GTEKDSSQFDNDR) are enriched in basic and acidic residues. 2 stretches are compositionally biased toward acidic residues: residues 2050–2067 (PAEEIPEEEDPLPEEALE) and 2074–2149 (GEEE…ENDS).

This sequence belongs to the Ycf2 family.

The protein resides in the plastid. Its subcellular location is the chloroplast stroma. In terms of biological role, probable ATPase of unknown function. Its presence in a non-photosynthetic plant (Epifagus virginiana) and experiments in tobacco indicate that it has an essential function which is probably not related to photosynthesis. The protein is Protein Ycf2 of Oenothera parviflora (Small-flowered evening primrose).